The chain runs to 459 residues: Aluminum-activated malate transporter 1 (459 aa).

Over 1–52 the chain is Extracellular; sequence MDIDHGRESDGEMVGTIASCGLLLHSLLAGLGRRAAGFARKVGGAAREDPRR. 2 helical membrane passes run 53–73 and 74–94; these read VAHS…YFVT and PLFN…VVVM. Topologically, residues 95–108 are extracellular; it reads EYTVGATLSKGLNR. The helical transmembrane segment at 109–129 threads the bilayer; that stretch reads ALATLVAGCIAVGAHQLAELA. The Cytoplasmic segment spans residues 130 to 137; it reads ERCGDQGE. The helical transmembrane segment at 138–158 threads the bilayer; that stretch reads PIVLTVLVFFVASAATFLRFI. Over 159-160 the chain is Extracellular; sequence PE. A helical membrane pass occupies residues 161–181; it reads IKAKYDYGVTIFILTFGLVAV. Residues 182-199 are Cytoplasmic-facing; sequence SSYRVEELIQLAHQRFYT. Residues 200–220 form a helical membrane-spanning segment; the sequence is IAVGVFICLCTTVFLFPVWAG. The Extracellular portion of the chain corresponds to 221–459; it reads EDVHKLASGN…DEPLPDVVIL (239 aa).

The protein belongs to the aromatic acid exporter (TC 2.A.85) family. As to expression, detected in root tips.

The protein localises to the cell membrane. Activated by external aluminum. The enhancement of malate transport is not due to alteration in the selectivity properties but is due to an increased anion permeability. Malate transporter critical for aluminum tolerance. Permeable to chloride, nitrate, sulfate and malate. In Triticum aestivum (Wheat), this protein is Aluminum-activated malate transporter 1 (ALMT1).